The following is a 185-amino-acid chain: MSTHTARRAGATAGHDRDRGTEPGRTEFRRAMGLLPTGVAVVTVGSGEQTEAVTVGSVVSVSLDPALVLVSLGSTGRLVEAIDRAGGFAVNVLTTEQSDLSACFASHDRPHGRGAEERLGGVAGASGHVLLRDAVLSMECRTEHRYPGGDHVLFLGRVDELHTAEAAGSPLVHHRGAYTTLKDPC.

A compositionally biased stretch (low complexity) spans 1 to 13 (MSTHTARRAGATA). Positions 1-24 (MSTHTARRAGATAGHDRDRGTEPG) are disordered. Positions 14 to 24 (GHDRDRGTEPG) are enriched in basic and acidic residues.

Belongs to the non-flavoprotein flavin reductase family. As to quaternary structure, does not interact with AsuE1, suggesting a possible transient interaction between the two enzymes instead of formation of a stable complex.

The enzyme catalyses FMNH2 + NAD(+) = FMN + NADH + 2 H(+). The protein operates within antibiotic biosynthesis. Functionally, involved in the biosynthesis of the antibiotic asukamycin. When flavin concentration is low, AsuE2 assists the protoasukamycin 4-monooxygenase AsuE1 by providing a reduced form of flavin, enhancing AsuE1 activity. This is NADH-dependent FMN reductase AsuE2 from Streptomyces nodosus subsp. asukaensis.